The following is a 295-amino-acid chain: 4-diphosphocytidyl-2-C-methyl-D-erythritol kinase (295 aa).

Lysine 15 is an active-site residue. 102–112 (PIASGVGGGSS) provides a ligand contact to ATP. The active site involves aspartate 144.

It belongs to the GHMP kinase family. IspE subfamily.

It catalyses the reaction 4-CDP-2-C-methyl-D-erythritol + ATP = 4-CDP-2-C-methyl-D-erythritol 2-phosphate + ADP + H(+). The protein operates within isoprenoid biosynthesis; isopentenyl diphosphate biosynthesis via DXP pathway; isopentenyl diphosphate from 1-deoxy-D-xylulose 5-phosphate: step 3/6. Functionally, catalyzes the phosphorylation of the position 2 hydroxy group of 4-diphosphocytidyl-2C-methyl-D-erythritol. This chain is 4-diphosphocytidyl-2-C-methyl-D-erythritol kinase, found in Mesorhizobium japonicum (strain LMG 29417 / CECT 9101 / MAFF 303099) (Mesorhizobium loti (strain MAFF 303099)).